We begin with the raw amino-acid sequence, 200 residues long: MKRKNNKFIEISIAFILGVALGIYGQNPDYFTNLINQKSLASSAPKIKHYNISELLRSKVSTCFTPPAGCTKFIANQIDRAEESIYMQAYGMSDALITTALINAQMRGVKVRILLDRSNLKQKFSKLHELQRAKIDVGIDKVPGIAHNKVIIIDRKKVITGSFNFTAAADKRNAENVIIIEDRELAESYLQNWLNRKASN.

The first 25 residues, 1-25, serve as a signal peptide directing secretion; sequence MKRKNNKFIEISIAFILGVALGIYG. Positions 142–169 constitute a PLD phosphodiesterase domain; sequence VPGIAHNKVIIIDRKKVITGSFNFTAAA. Catalysis depends on residues His147, Lys149, and Asp154.

The protein belongs to the phospholipase D family. In terms of assembly, homodimer.

Its subcellular location is the secreted. The enzyme catalyses a 1,2-diacyl-sn-glycero-3-phosphocholine + H2O = a 1,2-diacyl-sn-glycero-3-phosphate + choline + H(+). Its function is as follows. Could be a virulence factor. The sequence is that of Phospholipase D (pld) from Rickettsia felis (strain ATCC VR-1525 / URRWXCal2) (Rickettsia azadi).